The sequence spans 146 residues: uncharacterized protein (146 aa).

The first 24 residues, 1–24, serve as a signal peptide directing secretion; that stretch reads MVIYYGKKNCTLLLLLFILCNIYS. Asparagine 99 and asparagine 106 each carry an N-linked (GlcNAc...) asparagine glycan.

This is an uncharacterized protein from Saccharomyces cerevisiae (strain ATCC 204508 / S288c) (Baker's yeast).